Consider the following 255-residue polypeptide: Electron transfer flavoprotein subunit beta (255 aa).

Position 2 is an N-acetylalanine (alanine 2). AMP contacts are provided by residues alanine 9, 39-42 (NPFC), cysteine 66, and 123-134 (GKQAIDDDCNQT). A recognition loop region spans residues 183 to 205 (ADLRLNEPRYATLPNIMKAKKKK). Lysine 200 is modified (N6,N6,N6-trimethyllysine; by ETFBKMT; alternate). Lysine 200 carries the post-translational modification N6-acetyllysine; alternate. Residue lysine 200 is modified to N6-methyllysine; alternate. N6,N6,N6-trimethyllysine; by ETFBKMT is present on lysine 203. Residue lysine 210 is modified to N6-acetyllysine; alternate. Lysine 210 bears the N6-succinyllysine; alternate mark. A phosphoserine mark is found at serine 223 and serine 226. Lysine 238 carries the N6-acetyllysine modification. Lysine 248 carries the N6-acetyllysine; alternate modification. Lysine 248 carries the N6-succinyllysine; alternate modification.

The protein belongs to the ETF beta-subunit/FixA family. Heterodimer composed of ETFA and ETFB. Identified in a complex that contains ETFA, ETFB and ETFRF1. Interacts with ACADM. Methylated. Trimethylation at Lys-200 and Lys-203 may negatively regulate the activity in electron transfer from acyl-CoA dehydrogenases.

It localises to the mitochondrion matrix. Functionally, heterodimeric electron transfer flavoprotein that accepts electrons from several mitochondrial dehydrogenases, including acyl-CoA dehydrogenases, glutaryl-CoA and sarcosine dehydrogenase. It transfers the electrons to the main mitochondrial respiratory chain via ETF-ubiquinone oxidoreductase. Required for normal mitochondrial fatty acid oxidation and normal amino acid metabolism. ETFB binds an AMP molecule that probably has a purely structural role. This Pongo abelii (Sumatran orangutan) protein is Electron transfer flavoprotein subunit beta.